Reading from the N-terminus, the 62-residue chain is Large ribosomal subunit protein bL33 (62 aa).

Belongs to the bacterial ribosomal protein bL33 family.

The sequence is that of Large ribosomal subunit protein bL33 from Parabacteroides distasonis (strain ATCC 8503 / DSM 20701 / CIP 104284 / JCM 5825 / NCTC 11152).